Here is a 477-residue protein sequence, read N- to C-terminus: UDP-N-acetylmuramate--L-alanine ligase (477 aa).

118-124 (GTHGKTS) contributes to the ATP binding site.

This sequence belongs to the MurCDEF family.

It localises to the cytoplasm. The catalysed reaction is UDP-N-acetyl-alpha-D-muramate + L-alanine + ATP = UDP-N-acetyl-alpha-D-muramoyl-L-alanine + ADP + phosphate + H(+). It functions in the pathway cell wall biogenesis; peptidoglycan biosynthesis. In terms of biological role, cell wall formation. The chain is UDP-N-acetylmuramate--L-alanine ligase from Corynebacterium diphtheriae (strain ATCC 700971 / NCTC 13129 / Biotype gravis).